Reading from the N-terminus, the 481-residue chain is Inosine-5'-monophosphate dehydrogenase (481 aa).

CBS domains follow at residues 92-148 and 152-209; these read VIND…SKKV and MTKM…PEAN. NAD(+) contacts are provided by residues aspartate 244 and 293–295; that span reads GIG. 2 residues coordinate K(+): glycine 295 and glycine 297. Serine 298 contacts IMP. K(+) is bound at residue cysteine 300. The active-site Thioimidate intermediate is the cysteine 300. IMP-binding positions include 333–335, 356–357, and 380–384; these read DGG, GS, and YRGMG. Arginine 396 serves as the catalytic Proton acceptor. Glutamate 410 is a binding site for IMP. Glutamate 464, serine 465, and histidine 466 together coordinate K(+).

This sequence belongs to the IMPDH/GMPR family. In terms of assembly, homotetramer. It depends on K(+) as a cofactor.

The enzyme catalyses IMP + NAD(+) + H2O = XMP + NADH + H(+). Its pathway is purine metabolism; XMP biosynthesis via de novo pathway; XMP from IMP: step 1/1. Mycophenolic acid (MPA) is a non-competitive inhibitor that prevents formation of the closed enzyme conformation by binding to the same site as the amobile flap. In contrast, mizoribine monophosphate (MZP) is a competitive inhibitor that induces the closed conformation. MPA is a potent inhibitor of mammalian IMPDHs but a poor inhibitor of the bacterial enzymes. MZP is a more potent inhibitor of bacterial IMPDH. Its function is as follows. Catalyzes the conversion of inosine 5'-phosphate (IMP) to xanthosine 5'-phosphate (XMP), the first committed and rate-limiting step in the de novo synthesis of guanine nucleotides, and therefore plays an important role in the regulation of cell growth. The sequence is that of Inosine-5'-monophosphate dehydrogenase from Helicobacter pylori (strain ATCC 700392 / 26695) (Campylobacter pylori).